A 598-amino-acid chain; its full sequence is Elongation factor 4 2 (598 aa).

The 183-residue stretch at 2-184 folds into the tr-type G domain; it reads KHIRNFCIIA…GIVKNLPAPK (183 aa). GTP-binding positions include 14–19 and 131–134; these read DHGKST and NKID.

It belongs to the TRAFAC class translation factor GTPase superfamily. Classic translation factor GTPase family. LepA subfamily.

It is found in the cell inner membrane. It carries out the reaction GTP + H2O = GDP + phosphate + H(+). In terms of biological role, required for accurate and efficient protein synthesis under certain stress conditions. May act as a fidelity factor of the translation reaction, by catalyzing a one-codon backward translocation of tRNAs on improperly translocated ribosomes. Back-translocation proceeds from a post-translocation (POST) complex to a pre-translocation (PRE) complex, thus giving elongation factor G a second chance to translocate the tRNAs correctly. Binds to ribosomes in a GTP-dependent manner. The protein is Elongation factor 4 2 of Rhodopirellula baltica (strain DSM 10527 / NCIMB 13988 / SH1).